The sequence spans 438 residues: 23S rRNA (uracil(1939)-C(5))-methyltransferase RlmD (438 aa).

In terms of domain architecture, TRAM spans 11 to 69 (LQPESKHQQVLVEKLDHQGAGIAYLNKKPLFIDGTLPGEEVVTQLTESKSKFARGKLIK). The [4Fe-4S] cluster site is built by C82, C88, C91, and C169. S-adenosyl-L-methionine-binding residues include Q272, F301, N306, E322, N349, and D370. C396 (nucleophile) is an active-site residue.

This sequence belongs to the class I-like SAM-binding methyltransferase superfamily. RNA M5U methyltransferase family. RlmD subfamily.

The catalysed reaction is uridine(1939) in 23S rRNA + S-adenosyl-L-methionine = 5-methyluridine(1939) in 23S rRNA + S-adenosyl-L-homocysteine + H(+). Its function is as follows. Catalyzes the formation of 5-methyl-uridine at position 1939 (m5U1939) in 23S rRNA. In Vibrio vulnificus (strain YJ016), this protein is 23S rRNA (uracil(1939)-C(5))-methyltransferase RlmD.